The chain runs to 744 residues: Protein zyg-11 homolog B (744 aa).

3 LRR repeats span residues 185-208, 216-236, and 237-261; these read LPRL…LACK, MHHL…VREL, and KHLN…LLEQ.

Belongs to the zyg-11 family. (Microbial infection) Interacts with SARS-COV-2 protein ORF10. In terms of assembly, interacts with ELOC/Elongin C. Part of an E3 ubiquitin ligase complex including ZYG11B, CUL2 and Elongin BC. Post-translationally, (Microbial infection) Ubiquitinated; leading to proteasomal degradation in the presence of herpes simplex virus 1/HHV-1.

It is found in the cytoplasm. Serves as substrate adapter subunit in the E3 ubiquitin ligase complex ZYG11B-CUL2-Elongin BC. Acts to target substrates bearing N-terminal degrons for proteasomal degradation with the first four residues of substrates being the key recognition elements. Prefers Nt-Gly but also has the capacity to recognize Nt-Ser, -Ala and -Cys. Involved in the clearance of proteolytic fragments generated by caspase cleavage during apoptosis since N-terminal glycine degrons are strongly enriched at caspase cleavage sites. Also important in the quality control of protein N-myristoylation in which N-terminal glycine degrons are conditionally exposed after a failure of N-myristoylation. In addition, plays a role in the amplification of cGAS to enhance innate immune response. Mechanistically, strengthens the processes of cGAS binding with dsDNA and assembling oligomers and also accelerates and stabilizes cGAS-DNA condensation, thereby enhancing production of antiviral IFNs and inflammatory cytokines. This is Protein zyg-11 homolog B from Homo sapiens (Human).